Consider the following 452-residue polypeptide: Tubulin alpha-2/alpha-4 chain (452 aa).

Glutamine 11 provides a ligand contact to GTP. N6-acetyllysine is present on lysine 40. The GTP site is built by glutamate 71, serine 140, glycine 144, threonine 145, threonine 179, asparagine 206, and asparagine 228. Glutamate 71 provides a ligand contact to Mg(2+). Residue glutamate 254 is part of the active site. A disordered region spans residues 432-452; sequence YEEVGVDSVEGEGEEEGGEEY.

The protein belongs to the tubulin family. In terms of assembly, dimer of alpha and beta chains. A typical microtubule is a hollow water-filled tube with an outer diameter of 25 nm and an inner diameter of 15 nM. Alpha-beta heterodimers associate head-to-tail to form protofilaments running lengthwise along the microtubule wall with the beta-tubulin subunit facing the microtubule plus end conferring a structural polarity. Microtubules usually have 13 protofilaments but different protofilament numbers can be found in some organisms and specialized cells. Requires Mg(2+) as cofactor. Undergoes a tyrosination/detyrosination cycle, the cyclic removal and re-addition of a C-terminal tyrosine residue by the enzymes tubulin tyrosine carboxypeptidase (TTCP) and tubulin tyrosine ligase (TTL), respectively. Post-translationally, acetylation of alpha chains at Lys-40 stabilizes microtubules and affects affinity and processivity of microtubule motors. This modification has a role in multiple cellular functions, ranging from cell motility, cell cycle progression or cell differentiation to intracellular trafficking and signaling.

The protein resides in the cytoplasm. Its subcellular location is the cytoskeleton. It catalyses the reaction GTP + H2O = GDP + phosphate + H(+). Functionally, tubulin is the major constituent of microtubules, a cylinder consisting of laterally associated linear protofilaments composed of alpha- and beta-tubulin heterodimers. Microtubules grow by the addition of GTP-tubulin dimers to the microtubule end, where a stabilizing cap forms. Below the cap, tubulin dimers are in GDP-bound state, owing to GTPase activity of alpha-tubulin. In Patella vulgata (Common limpet), this protein is Tubulin alpha-2/alpha-4 chain (TUB2).